Here is a 197-residue protein sequence, read N- to C-terminus: EF-hand calcium-binding domain-containing protein 9 (197 aa).

The Ca(2+) site is built by Asp58 and Asp69. EF-hand domains lie at 59-94 (LKKAQINIVFDMLDWNAVGEIDFEKFYMLVCMLLAH), 100-135 (GQFMYRHSRPVFDLLDLKGDLRIGAKNFEMYRFLFN), and 136-171 (IQKQELKDLFRDFDITGDNRLNYQEFKLYTIIYTDK). Positions 149, 153, 155, and 160 each coordinate Ca(2+). Basic and acidic residues predominate over residues 177 to 188 (KTEEKEKGERKR). The interval 177–197 (KTEEKEKGERKRSLYSKCHIK) is disordered.

In terms of assembly, component of the CatSper complex or CatSpermasome composed of the core pore-forming members CATSPER1, CATSPER2, CATSPER3 and CATSPER4 as well as auxiliary members CATSPERB, CATSPERG, CATSPERD, CATSPERE, CATSPERZ, C2CD6/CATSPERT, TMEM249, TMEM262 and EFCAB9. HSPA1 may be an additional auxiliary complex member. The core complex members CATSPER1, CATSPER2, CATSPER3 and CATSPER4 form a heterotetrameric channel. The auxiliary CATSPERB, CATSPERG, CATSPERD and CATSPERE subunits form a pavilion-like structure over the pore which stabilizes the complex through interactions with CATSPER4, CATSPER3, CATSPER1 and CATSPER2 respectively. TMEM262/CATSPERH interacts with CATSPERB, further stabilizing the complex. C2CD6/CATSPERT interacts at least with CATSPERD and is required for targeting the CatSper complex in the flagellar membrane. Interacts with CATSPERZ; the interaction is direct, Ca(2+)-dependent and connects EFCAB9 with the CatSper complex. Dissociates from CATSPERZ at elevated pH.

It localises to the cytoplasm. It is found in the cell projection. Its subcellular location is the cilium. The protein localises to the flagellum. Functionally, auxiliary component of the CatSper complex, a complex involved in sperm cell hyperactivation. pH-dependent Ca(2+) sensor required to activate the CatSper channel. Sperm cell hyperactivation is needed for sperm motility which is essential late in the preparation of sperm for fertilization. Associates with the CatSper complex via direct interaction with CATSPERZ, and senses intracellular Ca(2+). Together with CATSPERZ, associates with the CatSper channel pore and is required for the two-row structure of each single CatSper channel. This chain is EF-hand calcium-binding domain-containing protein 9, found in Homo sapiens (Human).